The sequence spans 616 residues: Methylmalonyl-CoA mutase small subunit (616 aa).

It belongs to the methylmalonyl-CoA mutase family. As to quaternary structure, heterodimer of an alpha and a beta chain. It depends on adenosylcob(III)alamin as a cofactor.

The enzyme catalyses (R)-methylmalonyl-CoA = succinyl-CoA. The protein operates within metabolic intermediate metabolism; propanoyl-CoA degradation; succinyl-CoA from propanoyl-CoA: step 3/3. In terms of biological role, catalyzes the isomerization of succinyl-CoA to methylmalonyl-CoA during synthesis of propionate from tricarboxylic acid-cycle intermediates. This conversion most likely represents an important source of building blocks for polyketide antibiotic biosynthesis. It is unable to catalyze the conversion of isobutyryl-CoA into N-butyryl-CoA. In Streptomyces virginiae (Streptomyces cinnamonensis), this protein is Methylmalonyl-CoA mutase small subunit (mutA).